The chain runs to 449 residues: Phosphoglucosamine mutase (449 aa).

Serine 105 acts as the Phosphoserine intermediate in catalysis. Mg(2+) is bound by residues serine 105, aspartate 242, aspartate 244, and aspartate 246. At serine 105 the chain carries Phosphoserine.

It belongs to the phosphohexose mutase family. Mg(2+) is required as a cofactor. Post-translationally, activated by phosphorylation.

The enzyme catalyses alpha-D-glucosamine 1-phosphate = D-glucosamine 6-phosphate. Catalyzes the conversion of glucosamine-6-phosphate to glucosamine-1-phosphate. This chain is Phosphoglucosamine mutase, found in Clavibacter sepedonicus (Clavibacter michiganensis subsp. sepedonicus).